The primary structure comprises 1086 residues: Transcription initiation factor TFIID subunit 2 (1086 aa).

Polar residues predominate over residues 1–11; that stretch reads MDFSEASTSGD. 2 disordered regions span residues 1–53 and 1064–1086; these read MDFS…PPPV and GYEAARRSPPRRDFGDETMNLMQ. Pro residues-rich tracts occupy residues 19–36 and 44–53; these read PFPPKPREGAPPPAPPLA and APPPLQPPPV. Residues 1067 to 1078 show a composition bias toward basic and acidic residues; that stretch reads AARRSPPRRDFG.

It belongs to the TAF2 family. Component of the TFIID basal transcription factor complex, composed of TATA-box-binding protein tbp-1, and a number of TBP-associated factors (TAFs).

Its subcellular location is the nucleus. Its function is as follows. The TFIID basal transcription factor complex plays a major role in the initiation of RNA polymerase II (Pol II)-dependent transcription. TFIID recognizes and binds promoters via its subunit tbp-1, a TATA-box-binding protein, and promotes assembly of the pre-initiation complex (PIC). The TFIID complex consists of tbp-1 and TBP-associated factors (TAFs), including taf-2. May regulate RNA polymerase II activity and thereby may control transcription initiation by RNA polymerase II. This is Transcription initiation factor TFIID subunit 2 from Caenorhabditis elegans.